Here is a 245-residue protein sequence, read N- to C-terminus: 1-(5-phosphoribosyl)-5-[(5-phosphoribosylamino)methylideneamino] imidazole-4-carboxamide isomerase (245 aa).

The active-site Proton acceptor is D7. Catalysis depends on D129, which acts as the Proton donor.

It belongs to the HisA/HisF family.

The protein resides in the cytoplasm. The enzyme catalyses 1-(5-phospho-beta-D-ribosyl)-5-[(5-phospho-beta-D-ribosylamino)methylideneamino]imidazole-4-carboxamide = 5-[(5-phospho-1-deoxy-D-ribulos-1-ylimino)methylamino]-1-(5-phospho-beta-D-ribosyl)imidazole-4-carboxamide. The protein operates within amino-acid biosynthesis; L-histidine biosynthesis; L-histidine from 5-phospho-alpha-D-ribose 1-diphosphate: step 4/9. The polypeptide is 1-(5-phosphoribosyl)-5-[(5-phosphoribosylamino)methylideneamino] imidazole-4-carboxamide isomerase (Yersinia pestis bv. Antiqua (strain Antiqua)).